We begin with the raw amino-acid sequence, 333 residues long: DNA-directed RNA polymerase subunit alpha (333 aa).

Residues 1–234 (MQSSVNEFLT…QQLAAFVDLK (234 aa)) are alpha N-terminal domain (alpha-NTD). Residues 248–333 (IDPILLRPVD…SLKKDDKATA (86 aa)) are alpha C-terminal domain (alpha-CTD).

The protein belongs to the RNA polymerase alpha chain family. As to quaternary structure, homodimer. The RNAP catalytic core consists of 2 alpha, 1 beta, 1 beta' and 1 omega subunit. When a sigma factor is associated with the core the holoenzyme is formed, which can initiate transcription.

It catalyses the reaction RNA(n) + a ribonucleoside 5'-triphosphate = RNA(n+1) + diphosphate. Its function is as follows. DNA-dependent RNA polymerase catalyzes the transcription of DNA into RNA using the four ribonucleoside triphosphates as substrates. The sequence is that of DNA-directed RNA polymerase subunit alpha from Stutzerimonas stutzeri (strain A1501) (Pseudomonas stutzeri).